A 504-amino-acid polypeptide reads, in one-letter code: Sensor protein FixL (504 aa).

The tract at residues 1-21 (MTDTPTQALPPKAPQAGPTVP) is disordered. Residues 1-50 (MTDTPTQALPPKAPQAGPTVPGTVRRAVPGSAAAALVIAASHFAALSAFD) are Cytoplasmic-facing. The helical transmembrane segment at 51 to 71 (PRILLVLLVIVVLASSGGLFA) threads the bilayer. Residues 72–99 (GLAATAVSALGLALRGLLSGDTVVADWQ) are Periplasmic-facing. Residues 100–118 (SLGLLTIAGAGIAVLGERL) form a helical membrane-spanning segment. Topologically, residues 119–504 (RRTRLDAVAR…TVDEEAMNDA (386 aa)) are cytoplasmic. In terms of domain architecture, PAS spans 135 to 202 (REAHLSSILD…QHDLYLSRYL (68 aa)). Residues 203-262 (TTGERRIIGIGRVVTGERKDGATFPMELAVGEMHSVSGRFFTGFIRDLTERQNTEARLQE) form the PAC domain. The Histidine kinase domain maps to 282–497 (TLAHELNQPL…IFRFTLRTVD (216 aa)). Phosphohistidine; by autocatalysis is present on histidine 285.

Heme is required as a cofactor.

It is found in the cell inner membrane. The enzyme catalyses ATP + protein L-histidine = ADP + protein N-phospho-L-histidine.. With respect to regulation, the heme moiety regulates the kinase activity. Putative oxygen sensor; modulates the activity of FixJ, a transcriptional activator of nitrogen fixation fixK gene. FixL probably acts as a kinase that phosphorylates FixJ. The polypeptide is Sensor protein FixL (fixL) (Azorhizobium caulinodans (strain ATCC 43989 / DSM 5975 / JCM 20966 / LMG 6465 / NBRC 14845 / NCIMB 13405 / ORS 571)).